A 506-amino-acid polypeptide reads, in one-letter code: Ribose import ATP-binding protein RbsA 2 (506 aa).

2 ABC transporter domains span residues 5–241 (LRLS…VGRR) and 254–498 (ADAP…TAGT). 37 to 44 (GENGAGKS) provides a ligand contact to ATP.

Belongs to the ABC transporter superfamily. Ribose importer (TC 3.A.1.2.1) family. The complex is composed of an ATP-binding protein (RbsA), two transmembrane proteins (RbsC) and a solute-binding protein (RbsB).

It is found in the cell inner membrane. The enzyme catalyses D-ribose(out) + ATP + H2O = D-ribose(in) + ADP + phosphate + H(+). Functionally, part of the ABC transporter complex RbsABC involved in ribose import. Responsible for energy coupling to the transport system. In Burkholderia cenocepacia (strain HI2424), this protein is Ribose import ATP-binding protein RbsA 2.